We begin with the raw amino-acid sequence, 243 residues long: Uridylate kinase (243 aa).

An ATP-binding site is contributed by 15–18 (KLSG). Residues 23–28 (GEEGFG) form an involved in allosteric activation by GTP region. G57 is a binding site for UMP. Residues G58 and R62 each coordinate ATP. Residues D77 and 138–145 (TGNPFFTT) contribute to the UMP site. ATP contacts are provided by T165, F171, and D174.

This sequence belongs to the UMP kinase family. As to quaternary structure, homohexamer.

The protein localises to the cytoplasm. It carries out the reaction UMP + ATP = UDP + ADP. It participates in pyrimidine metabolism; CTP biosynthesis via de novo pathway; UDP from UMP (UMPK route): step 1/1. Allosterically activated by GTP. Inhibited by UTP. In terms of biological role, catalyzes the reversible phosphorylation of UMP to UDP. The protein is Uridylate kinase of Aliivibrio fischeri (strain ATCC 700601 / ES114) (Vibrio fischeri).